Here is a 549-residue protein sequence, read N- to C-terminus: MQADFVIIGSGSAGSALAYRLSEDGANSVVVLEFGGSDVGPFIQMPAALAWPMSMNRYNWGYLSEPEPNLNNRRITAPRGKVIGGSSSINGMVYVRGHSEDFDRWEELGAKGWAYADVLPYYKRMEHSHGGEEGWRGTDGPLHVQRGPVKNPLFHAFIEAGKQAGFEVTEDYNGSKQEGFGLMEQTTWRGRRWSAASAYLRPALKRPNVELVRCFARKIVIENGRATGVEIERGGRTEVVRANREVIVSASSFNSPKLLMLSGIGPAAHLQEMGIDVKADRPGVGQNLQDHMEFYFQQVSTKPVSLYSWLPWFWQGVAGAQWLFFKRGLGISNQFESCAFLRSAPGVKQPDIQYHFLPVAISYDGKAAAKSHGFQVHVGYNLSKSRGDVTLRSSDPKADPVIRFNYMSHPEDWEKFRHCVRLTREIFGQKAFDLYRGPEIQPGEKVRTDEEIDAFLREHLESAYHPCGTCKMGAKDDPMAVVDPETRVIGVDGLRVADSSIFPHITYGNLNAPSIMTGEKAADHILGKQPLARSNQEPWINPRWAVSDR.

4 to 33 lines the FAD pocket; it reads DFVIIGSGSAGSALAYRLSEDGANSVVVLE. The active-site Proton acceptor is histidine 465.

The protein belongs to the GMC oxidoreductase family. The cofactor is FAD.

The enzyme catalyses choline + A = betaine aldehyde + AH2. It carries out the reaction betaine aldehyde + NAD(+) + H2O = glycine betaine + NADH + 2 H(+). The protein operates within amine and polyamine biosynthesis; betaine biosynthesis via choline pathway; betaine aldehyde from choline (cytochrome c reductase route): step 1/1. Functionally, involved in the biosynthesis of the osmoprotectant glycine betaine. Catalyzes the oxidation of choline to betaine aldehyde and betaine aldehyde to glycine betaine at the same rate. The polypeptide is Oxygen-dependent choline dehydrogenase (Sinorhizobium medicae (strain WSM419) (Ensifer medicae)).